The following is a 569-amino-acid chain: Glutamyl-tRNA reductase (569 aa).

Residues 49 to 52 (TCNR), Ser109, 114 to 116 (EGQ), and Gln120 each bind substrate. Cys50 serves as the catalytic Nucleophile. An NADP(+)-binding site is contributed by 192–197 (GAGSMS). The insert stretch occupies residues 284–397 (PVAVREETPA…VEAPRPAPAL (114 aa)). The disordered stretch occupies residues 546-569 (AAVSRADDRDTSDSTENAKNRGRE). Positions 550–569 (RADDRDTSDSTENAKNRGRE) are enriched in basic and acidic residues.

This sequence belongs to the glutamyl-tRNA reductase family. Homodimer.

The catalysed reaction is (S)-4-amino-5-oxopentanoate + tRNA(Glu) + NADP(+) = L-glutamyl-tRNA(Glu) + NADPH + H(+). It functions in the pathway porphyrin-containing compound metabolism; protoporphyrin-IX biosynthesis; 5-aminolevulinate from L-glutamyl-tRNA(Glu): step 1/2. Its function is as follows. Catalyzes the NADPH-dependent reduction of glutamyl-tRNA(Glu) to glutamate 1-semialdehyde (GSA). The sequence is that of Glutamyl-tRNA reductase from Streptomyces avermitilis (strain ATCC 31267 / DSM 46492 / JCM 5070 / NBRC 14893 / NCIMB 12804 / NRRL 8165 / MA-4680).